Here is an 843-residue protein sequence, read N- to C-terminus: Protein P (843 aa).

The tract at residues 1 to 177 (MPLSYQHFRK…FCGSPYSWEQ (177 aa)) is terminal protein domain (TP). A spacer region spans residues 178 to 346 (DLQHGRLVFQ…YCLCHIVNLI (169 aa)). The tract at residues 220 to 265 (QSRLGPQPAQGQLAGRQQGGSGSIRARVHPSPWGTVGVEPSGSGPT) is disordered. Low complexity predominate over residues 223–235 (LGPQPAQGQLAGR). The polymerase/reverse transcriptase domain (RT) stretch occupies residues 347-690 (EDWGPCTEHG…YLNLYPVARQ (344 aa)). Residues 357–600 (EHLIRTPRTP…YSLNFMGYVI (244 aa)) enclose the Reverse transcriptase domain. Mg(2+) contacts are provided by aspartate 429, aspartate 551, and aspartate 552.

Belongs to the hepadnaviridae P protein family.

It catalyses the reaction DNA(n) + a 2'-deoxyribonucleoside 5'-triphosphate = DNA(n+1) + diphosphate. The enzyme catalyses Endonucleolytic cleavage to 5'-phosphomonoester.. With respect to regulation, activated by host HSP70 and HSP40 in vitro to be able to bind the epsilon loop of the pgRNA. Because deletion of the RNase H region renders the protein partly chaperone-independent, the chaperones may be needed indirectly to relieve occlusion of the RNA-binding site by this domain. Inhibited by several reverse-transcriptase inhibitors: Lamivudine, Adefovir and Entecavir. In terms of biological role, multifunctional enzyme that converts the viral RNA genome into dsDNA in viral cytoplasmic capsids. This enzyme displays a DNA polymerase activity that can copy either DNA or RNA templates, and a ribonuclease H (RNase H) activity that cleaves the RNA strand of RNA-DNA heteroduplexes in a partially processive 3'- to 5'-endonucleasic mode. Neo-synthesized pregenomic RNA (pgRNA) are encapsidated together with the P protein, and reverse-transcribed inside the nucleocapsid. Initiation of reverse-transcription occurs first by binding the epsilon loop on the pgRNA genome, and is initiated by protein priming, thereby the 5'-end of (-)DNA is covalently linked to P protein. Partial (+)DNA is synthesized from the (-)DNA template and generates the relaxed circular DNA (RC-DNA) genome. After budding and infection, the RC-DNA migrates in the nucleus, and is converted into a plasmid-like covalently closed circular DNA (cccDNA). The activity of P protein does not seem to be necessary for cccDNA generation, and is presumably released from (+)DNA by host nuclear DNA repair machinery. The polypeptide is Protein P (Hepatitis B virus genotype B2 (isolate Vietnam/9873/1997) (HBV-B)).